A 323-amino-acid chain; its full sequence is Mycothiol acetyltransferase (323 aa).

Glutamate 44 lines the 1D-myo-inositol 2-(L-cysteinylamino)-2-deoxy-alpha-D-glucopyranoside pocket. N-acetyltransferase domains follow at residues 77–176 (GQDL…VSLR) and 173–323 (VSLR…VKEG). 98–100 (IAV) contacts acetyl-CoA. 1D-myo-inositol 2-(L-cysteinylamino)-2-deoxy-alpha-D-glucopyranoside-binding residues include glutamate 200, lysine 240, and glutamate 253. Acetyl-CoA contacts are provided by residues 257 to 259 (VGV) and 264 to 270 (QGSGLGK). Position 291 (tyrosine 291) interacts with 1D-myo-inositol 2-(L-cysteinylamino)-2-deoxy-alpha-D-glucopyranoside.

This sequence belongs to the acetyltransferase family. MshD subfamily. As to quaternary structure, monomer.

It carries out the reaction 1D-myo-inositol 2-(L-cysteinylamino)-2-deoxy-alpha-D-glucopyranoside + acetyl-CoA = mycothiol + CoA + H(+). Functionally, catalyzes the transfer of acetyl from acetyl-CoA to desacetylmycothiol (Cys-GlcN-Ins) to form mycothiol. This Pseudarthrobacter chlorophenolicus (strain ATCC 700700 / DSM 12829 / CIP 107037 / JCM 12360 / KCTC 9906 / NCIMB 13794 / A6) (Arthrobacter chlorophenolicus) protein is Mycothiol acetyltransferase.